The primary structure comprises 643 residues: Phosphomethylpyrimidine synthase (643 aa).

Residues Asn248, Met277, Tyr306, His342, 362–364 (SRG), 403–406 (DGLR), and Glu442 each bind substrate. His446 contacts Zn(2+). Tyr469 lines the substrate pocket. Residue His510 coordinates Zn(2+). [4Fe-4S] cluster is bound by residues Cys590, Cys593, and Cys598.

The protein belongs to the ThiC family. In terms of assembly, homodimer. Requires [4Fe-4S] cluster as cofactor.

It catalyses the reaction 5-amino-1-(5-phospho-beta-D-ribosyl)imidazole + S-adenosyl-L-methionine = 4-amino-2-methyl-5-(phosphooxymethyl)pyrimidine + CO + 5'-deoxyadenosine + formate + L-methionine + 3 H(+). The protein operates within cofactor biosynthesis; thiamine diphosphate biosynthesis. In terms of biological role, catalyzes the synthesis of the hydroxymethylpyrimidine phosphate (HMP-P) moiety of thiamine from aminoimidazole ribotide (AIR) in a radical S-adenosyl-L-methionine (SAM)-dependent reaction. The polypeptide is Phosphomethylpyrimidine synthase (Burkholderia cenocepacia (strain ATCC BAA-245 / DSM 16553 / LMG 16656 / NCTC 13227 / J2315 / CF5610) (Burkholderia cepacia (strain J2315))).